The primary structure comprises 361 residues: UDP-3-O-acylglucosamine N-acyltransferase (361 aa).

Histidine 253 functions as the Proton acceptor in the catalytic mechanism.

It belongs to the transferase hexapeptide repeat family. LpxD subfamily. In terms of assembly, homotrimer.

The catalysed reaction is a UDP-3-O-[(3R)-3-hydroxyacyl]-alpha-D-glucosamine + a (3R)-hydroxyacyl-[ACP] = a UDP-2-N,3-O-bis[(3R)-3-hydroxyacyl]-alpha-D-glucosamine + holo-[ACP] + H(+). The protein operates within bacterial outer membrane biogenesis; LPS lipid A biosynthesis. Catalyzes the N-acylation of UDP-3-O-acylglucosamine using 3-hydroxyacyl-ACP as the acyl donor. Is involved in the biosynthesis of lipid A, a phosphorylated glycolipid that anchors the lipopolysaccharide to the outer membrane of the cell. The sequence is that of UDP-3-O-acylglucosamine N-acyltransferase from Burkholderia pseudomallei (strain 1710b).